The primary structure comprises 160 residues: Transcriptional repressor NrdR (160 aa).

Residues 3–34 (CPYCQYEDTQVKDSRPVEEGAVIRRRRVCPVC) fold into a zinc finger. Residues 49 to 139 (LLVSKKSGRC…VYRDFRNASD (91 aa)) enclose the ATP-cone domain.

It belongs to the NrdR family. Zn(2+) is required as a cofactor.

Negatively regulates transcription of bacterial ribonucleotide reductase nrd genes and operons by binding to NrdR-boxes. This chain is Transcriptional repressor NrdR, found in Bartonella quintana (strain Toulouse) (Rochalimaea quintana).